The sequence spans 171 residues: ATP synthase subunit b (171 aa).

Residues 32–52 (FFAVLLIFLIVLGVIAKWVVP) traverse the membrane as a helical segment.

It belongs to the ATPase B chain family. In terms of assembly, F-type ATPases have 2 components, F(1) - the catalytic core - and F(0) - the membrane proton channel. F(1) has five subunits: alpha(3), beta(3), gamma(1), delta(1), epsilon(1). F(0) has three main subunits: a(1), b(2) and c(10-14). The alpha and beta chains form an alternating ring which encloses part of the gamma chain. F(1) is attached to F(0) by a central stalk formed by the gamma and epsilon chains, while a peripheral stalk is formed by the delta and b chains.

It localises to the cell membrane. Functionally, f(1)F(0) ATP synthase produces ATP from ADP in the presence of a proton or sodium gradient. F-type ATPases consist of two structural domains, F(1) containing the extramembraneous catalytic core and F(0) containing the membrane proton channel, linked together by a central stalk and a peripheral stalk. During catalysis, ATP synthesis in the catalytic domain of F(1) is coupled via a rotary mechanism of the central stalk subunits to proton translocation. In terms of biological role, component of the F(0) channel, it forms part of the peripheral stalk, linking F(1) to F(0). The sequence is that of ATP synthase subunit b from Mycolicibacterium gilvum (strain PYR-GCK) (Mycobacterium gilvum (strain PYR-GCK)).